The primary structure comprises 1149 residues: Protein deacetylase HDAC6 (1149 aa).

The tract at residues 1–61 (MTSTGQDSST…KGKMKKLSQP (61 aa)) is disordered. Residues 18-29 (NPQSPLQESSAT) show a composition bias toward polar residues. S21 carries the phosphoserine modification. The residue at position 32 (R32) is an Omega-N-methylarginine. Phosphoserine is present on S43. Positions 66–75 (LVVGLQGLDL) match the Nuclear export signal motif. Histone deacetylase stretches follow at residues 87–403 (LVFD…TLLG) and 481–799 (GLVY…SLLG). The active-site 1 is the H215. Residue H610 is the 2 of the active site. The tract at residues 954–975 (ALGETEPTPPASHTNKQTTGAS) is disordered. A phosphothreonine mark is found at T958, T961, T967, and T971. The span at 964-975 (ASHTNKQTTGAS) shows a compositional bias: polar residues. S975 carries the phosphoserine modification. The UBP-type zinc-finger motif lies at 1045-1143 (SWCPHLMAVC…NAAHQNKFGE (99 aa)). Residues C1047, H1049, C1067, C1070, C1079, C1082, and C1087 each contribute to the Zn(2+) site. Residues 1088–1090 (SRY) are ubiquitin binding. Residues H1094, H1098, H1104, C1117, and C1120 each contribute to the Zn(2+) site. Residues 1116 to 1123 (WCYVCQAY) are ubiquitin binding. The residue at position 1148 (S1148) is a Phosphoserine.

The protein belongs to the histone deacetylase family. HD type 2 subfamily. In terms of assembly, forms a trimeric complex in the nucleus consisting of BANP, HDAC6 and KHDRBS1/SAM68; HDAC6 keeps KHDRBS1 in a deacetylated state which inhibits the inclusion of CD44 alternate exons. The complex is disrupted by MAPK1/MAPK3-mediated phosphorylation of BANP which results in BANP export to the cytoplasm. This facilitates acetylation of KHDRBS1 and CD44 variant exon inclusion. Interacts with SIRT2 (via both phosphorylated, unphosphorylated, active or inactive forms); the interaction is necessary for the complex to interact with alpha-tubulin. Under proteasome impairment conditions, interacts with UBD via its histone deacetylase 1 and UBP-type zinc-finger regions. Interacts with BBIP1, CBFA2T3, CYLD, DDIT3/CHOP, ZMYND15, F-actin and HDAC11. Interacts with RIPOR2; this interaction occurs during early myogenic differentiation and prevents HDAC6 to deacetylate tubulin. Interacts with AURKA; AURKA-mediated phosphorylation of HDAC6 promotes deacetylation of alpha-tubulin. Interacts with DYSF; this interaction occurs during early myogenic differentiation. Interacts with TPPP; inhibiting the tubulin deacetylase activity of HDAC6. Interacts with DYNLL1. Interacts with ATP13A2; the interaction results in recruitment of HDAC6 to lysosomes to promote CTTN deacetylation. Interacts with CCDC141 (via the N-terminal region); inhibiting the deacetylase activity of HDAC6. Interacts with IPO7; the interaction facilitates HDAC6 nuclear translocation in dental papilla cells. Requires Zn(2+) as cofactor. In terms of processing, phosphorylated by AURKA; phosphorylation increases HDAC6-mediated deacetylation of alpha-tubulin and subsequent disassembly of cilia. Ubiquitinated. Its polyubiquitination however does not lead to its degradation. Post-translationally, sumoylated in vitro. Expressed in neurons of the cortex. Expressed in Purkinje cells. Detected in keratinocytes (at protein level).

It is found in the cytoplasm. It localises to the cytoskeleton. The protein localises to the nucleus. The protein resides in the perikaryon. Its subcellular location is the cell projection. It is found in the dendrite. It localises to the axon. The protein localises to the cilium. The protein resides in the microtubule organizing center. Its subcellular location is the centrosome. It is found in the cilium basal body. The catalysed reaction is N(6)-acetyl-L-lysyl-[protein] + H2O = L-lysyl-[protein] + acetate. It catalyses the reaction N(6)-acetyl-L-lysyl-[alpha-tubulin] + H2O = L-lysyl-[alpha-tubulin] + acetate. It participates in protein modification; protein ubiquitination. Its function is as follows. Deacetylates a wide range of non-histone substrates. Plays a central role in microtubule-dependent cell motility by mediating deacetylation of tubulin. Required for cilia disassembly via deacetylation of alpha-tubulin. Alpha-tubulin deacetylation results in destabilization of dynamic microtubules. Promotes deacetylation of CTTN, leading to actin polymerization, promotion of autophagosome-lysosome fusion and completion of autophagy. Deacetylates SQSTM1. Deacetylates peroxiredoxins PRDX1 and PRDX2, decreasing their reducing activity. Deacetylates antiviral protein RIGI in the presence of viral mRNAs which is required for viral RNA detection by RIGI. Sequentially deacetylates and polyubiquitinates DNA mismatch repair protein MSH2 which leads to MSH2 degradation, reducing cellular sensitivity to DNA-damaging agents and decreasing cellular DNA mismatch repair activities. Deacetylates DNA mismatch repair protein MLH1 which prevents recruitment of the MutL alpha complex (formed by the MLH1-PMS2 heterodimer) to the MutS alpha complex (formed by the MSH2-MSH6 heterodimer), leading to tolerance of DNA damage. Deacetylates RHOT1/MIRO1 which blocks mitochondrial transport and mediates axon growth inhibition. Deacetylates transcription factor SP1 which leads to increased expression of ENG, positively regulating angiogenesis. Deacetylates KHDRBS1/SAM68 which regulates alternative splicing by inhibiting the inclusion of CD44 alternate exons. Promotes odontoblast differentiation following IPO7-mediated nuclear import and subsequent repression of RUNX2 expression. In addition to its protein deacetylase activity, plays a key role in the degradation of misfolded proteins: when misfolded proteins are too abundant to be degraded by the chaperone refolding system and the ubiquitin-proteasome, mediates the transport of misfolded proteins to a cytoplasmic juxtanuclear structure called aggresome. Probably acts as an adapter that recognizes polyubiquitinated misfolded proteins and target them to the aggresome, facilitating their clearance by autophagy. This chain is Protein deacetylase HDAC6, found in Mus musculus (Mouse).